Reading from the N-terminus, the 198-residue chain is Probable chemoreceptor glutamine deamidase CheD (198 aa).

It belongs to the CheD family.

The catalysed reaction is L-glutaminyl-[protein] + H2O = L-glutamyl-[protein] + NH4(+). In terms of biological role, probably deamidates glutamine residues to glutamate on methyl-accepting chemotaxis receptors (MCPs), playing an important role in chemotaxis. The protein is Probable chemoreceptor glutamine deamidase CheD of Xanthomonas campestris pv. campestris (strain 8004).